The primary structure comprises 178 residues: ATP synthase subunit delta (178 aa).

Belongs to the ATPase delta chain family. As to quaternary structure, F-type ATPases have 2 components, F(1) - the catalytic core - and F(0) - the membrane proton channel. F(1) has five subunits: alpha(3), beta(3), gamma(1), delta(1), epsilon(1). F(0) has three main subunits: a(1), b(2) and c(10-14). The alpha and beta chains form an alternating ring which encloses part of the gamma chain. F(1) is attached to F(0) by a central stalk formed by the gamma and epsilon chains, while a peripheral stalk is formed by the delta and b chains.

The protein resides in the cell inner membrane. Functionally, f(1)F(0) ATP synthase produces ATP from ADP in the presence of a proton or sodium gradient. F-type ATPases consist of two structural domains, F(1) containing the extramembraneous catalytic core and F(0) containing the membrane proton channel, linked together by a central stalk and a peripheral stalk. During catalysis, ATP synthesis in the catalytic domain of F(1) is coupled via a rotary mechanism of the central stalk subunits to proton translocation. This protein is part of the stalk that links CF(0) to CF(1). It either transmits conformational changes from CF(0) to CF(1) or is implicated in proton conduction. The chain is ATP synthase subunit delta from Marinomonas sp. (strain MWYL1).